We begin with the raw amino-acid sequence, 214 residues long: Pyridoxine/pyridoxamine 5'-phosphate oxidase (214 aa).

Residues 11–14 and K68 each bind substrate; that span reads RREY. FMN is bound by residues 63–68, 78–79, R84, K85, and Q107; these read RLVLLK and FT. Substrate is bound by residues Y125 and R129. FMN contacts are provided by residues 142-143 and W187; that span reads QS. 193–195 contacts substrate; that stretch reads RLH. FMN is bound at residue R197.

This sequence belongs to the pyridoxamine 5'-phosphate oxidase family. Homodimer. The cofactor is FMN.

The enzyme catalyses pyridoxamine 5'-phosphate + O2 + H2O = pyridoxal 5'-phosphate + H2O2 + NH4(+). The catalysed reaction is pyridoxine 5'-phosphate + O2 = pyridoxal 5'-phosphate + H2O2. It participates in cofactor metabolism; pyridoxal 5'-phosphate salvage; pyridoxal 5'-phosphate from pyridoxamine 5'-phosphate: step 1/1. It functions in the pathway cofactor metabolism; pyridoxal 5'-phosphate salvage; pyridoxal 5'-phosphate from pyridoxine 5'-phosphate: step 1/1. Its function is as follows. Catalyzes the oxidation of either pyridoxine 5'-phosphate (PNP) or pyridoxamine 5'-phosphate (PMP) into pyridoxal 5'-phosphate (PLP). The protein is Pyridoxine/pyridoxamine 5'-phosphate oxidase of Blochmanniella floridana.